A 463-amino-acid chain; its full sequence is MEKPSRETFEGNNKLLIGIVLSVITFWLFAQSLVNVVPILEDSFNTDIGTVNIAVSITALFSGMFVVGAGGLADKYGRIKLTNIGIILNILGSLLIIISNIPLLLIIGRLIQGLSAACIMPATLSIIKSYYIGKDRQRALSYWSIGSWGGSGVCSFFGGAVATLLGWRWIFILSIIISLIALFLIKGTPETKSKSISLNKFDIKGLVLLVIMLLSLNILITKGSELGVTSLLFITILAIAIVSFSLFIVLEKRATNPLIDFKLFKNKAYTGATASNFLLNGVAGTLIVANTFVQRGLGYSSLQAGSLSITYLVMVLIMIRVGEKLLQTFGCKKPMLIGTAVLIVGECLISLTFLPEILYVICCIIGYLFFGLGLGIYATPSTDTAIANAPLEKVGVAAGIYKMASALGGAFGVALSGAVYAIVSNMTNIDTGAMIALWLNAGMGILSFVIILLLVPKQNDTQL.

The next 14 membrane-spanning stretches (helical) occupy residues 17–37 (IGIV…VNVV), 53–73 (IAVS…GGLA), 86–106 (IILN…LLLI), 107–127 (IGRL…LSII), 142–162 (YWSI…GAVA), 165–185 (LGWR…LFLI), 201–221 (FDIK…ILIT), 230–250 (SLLF…FIVL), 273–293 (TASN…NTFV), 299–319 (YSSL…LIMI), 334–354 (PMLI…LTFL), 357–377 (ILYV…LGIY), 403–423 (MASA…YAIV), and 435–455 (IALW…LLLV).

Belongs to the major facilitator superfamily. TCR/Tet family.

The protein resides in the cell membrane. Multidrug efflux pump that acts independently of NorA and is one of the factors that confers resistance against diverse quinolones and chemical compounds. This Staphylococcus aureus (strain MRSA252) protein is Quinolone resistance protein NorB (norB).